The sequence spans 515 residues: 2-(3-amino-3-carboxypropyl)histidine synthase subunit 2 (515 aa).

Positions 104, 125, and 353 each coordinate [4Fe-4S] cluster. The tract at residues 493 to 515 is disordered; sequence GMDEPSVLEQGRSGVARGYTEEK.

The protein belongs to the DPH1/DPH2 family. DPH2 subfamily. As to quaternary structure, component of the 2-(3-amino-3-carboxypropyl)histidine synthase complex composed of DPH1, DPH2, DPH3 and a NADH-dependent reductase, predominantly CBR1. Requires [4Fe-4S] cluster as cofactor.

The protein localises to the cytoplasm. The protein operates within protein modification; peptidyl-diphthamide biosynthesis. Functionally, required for the first step of diphthamide biosynthesis, a post-translational modification of histidine which occurs in elongation factor 2. DPH1 and DPH2 transfer a 3-amino-3-carboxypropyl (ACP) group from S-adenosyl-L-methionine (SAM) to a histidine residue, the reaction is assisted by a reduction system comprising DPH3 and a NADH-dependent reductase, predominantly CBR1. Facilitates the reduction of the catalytic iron-sulfur cluster found in the DPH1 subunit. This Cryptococcus neoformans var. neoformans serotype D (strain B-3501A) (Filobasidiella neoformans) protein is 2-(3-amino-3-carboxypropyl)histidine synthase subunit 2 (DPH2).